Reading from the N-terminus, the 398-residue chain is Acetate kinase 1 (398 aa).

A Mg(2+)-binding site is contributed by N9. K16 provides a ligand contact to ATP. Substrate is bound at residue R89. D146 serves as the catalytic Proton donor/acceptor. Residues 206 to 210 (HLGNG), 281 to 283 (DCR), and 329 to 333 (GIGEN) contribute to the ATP site. E384 is a Mg(2+) binding site.

This sequence belongs to the acetokinase family. As to quaternary structure, homodimer. It depends on Mg(2+) as a cofactor. Requires Mn(2+) as cofactor.

The protein resides in the cytoplasm. The catalysed reaction is acetate + ATP = acetyl phosphate + ADP. The protein operates within metabolic intermediate biosynthesis; acetyl-CoA biosynthesis; acetyl-CoA from acetate: step 1/2. Catalyzes the formation of acetyl phosphate from acetate and ATP. Can also catalyze the reverse reaction. This is Acetate kinase 1 from Vibrio parahaemolyticus serotype O3:K6 (strain RIMD 2210633).